Here is a 198-residue protein sequence, read N- to C-terminus: Holliday junction branch migration complex subunit RuvA (198 aa).

The domain I stretch occupies residues 1-64 (MIAHLRGTLL…EDAIALFGFL (64 aa)). The domain II stretch occupies residues 65–141 (DREEKRLFER…LDDLIAAAPA (77 aa)). The segment at 141-145 (AAGPV) is flexible linker. Residues 146 to 198 (AAGPAAEDVLSALLNLGYQRPAALKAIETAVEKDAAAGEDFDLLFRAALKLIR) are domain III.

Belongs to the RuvA family. In terms of assembly, homotetramer. Forms an RuvA(8)-RuvB(12)-Holliday junction (HJ) complex. HJ DNA is sandwiched between 2 RuvA tetramers; dsDNA enters through RuvA and exits via RuvB. An RuvB hexamer assembles on each DNA strand where it exits the tetramer. Each RuvB hexamer is contacted by two RuvA subunits (via domain III) on 2 adjacent RuvB subunits; this complex drives branch migration. In the full resolvosome a probable DNA-RuvA(4)-RuvB(12)-RuvC(2) complex forms which resolves the HJ.

The protein resides in the cytoplasm. Functionally, the RuvA-RuvB-RuvC complex processes Holliday junction (HJ) DNA during genetic recombination and DNA repair, while the RuvA-RuvB complex plays an important role in the rescue of blocked DNA replication forks via replication fork reversal (RFR). RuvA specifically binds to HJ cruciform DNA, conferring on it an open structure. The RuvB hexamer acts as an ATP-dependent pump, pulling dsDNA into and through the RuvAB complex. HJ branch migration allows RuvC to scan DNA until it finds its consensus sequence, where it cleaves and resolves the cruciform DNA. The polypeptide is Holliday junction branch migration complex subunit RuvA (Acidobacterium capsulatum (strain ATCC 51196 / DSM 11244 / BCRC 80197 / JCM 7670 / NBRC 15755 / NCIMB 13165 / 161)).